Reading from the N-terminus, the 306-residue chain is MTNEFLHFEKISRQTWQSLHRKTTPPLTEEELESIKSFNDQISLQDVTDIYLPLAHLIQIYKRTKEDLAFSKGIFLQRESKSQPFIIGVSGSVAVGKSTTSRLLQILLSRTFTDATVELVTTDGFLYPNQTLIEQGILNRKGFPESYDMEALLNFLDRIKNGQDVDIPVYSHEVYDIVPEKKQSVKAADFVIVEGINVFQNPQNDRLYITDFFDFSIYVDAGVDDIESWYLDRFLKMLSLAQNDPDSYYYRFTQMPIGEVESFAHQVWISINLTNLQNYIEPTRNRAEVILHKSKNHEIDEIYLKK.

91-98 is an ATP binding site; the sequence is GSVAVGKS.

This sequence belongs to the prokaryotic pantothenate kinase family.

It localises to the cytoplasm. It catalyses the reaction (R)-pantothenate + ATP = (R)-4'-phosphopantothenate + ADP + H(+). The protein operates within cofactor biosynthesis; coenzyme A biosynthesis; CoA from (R)-pantothenate: step 1/5. The protein is Pantothenate kinase of Streptococcus pneumoniae (strain JJA).